Consider the following 2545-residue polypeptide: Methylphloroacetophenone synthase (2545 aa).

The segment at 8–261 (AFGALAPWPA…HVAIHEGIPQ (254 aa)) is N-terminal acylcarrier protein transacylase (SAT) domain. Positions 383–798 (KDAIAIIGMG…GSNAAMIVLE (416 aa)) constitute a Ketosynthase family 3 (KS3) domain. Active-site for beta-ketoacyl synthase activity residues include Cys-547, His-682, and His-721. Residues 914-1218 (LCFGGQVSDR…VSLQLNKPNS (305 aa)) form a malonyl-CoA:ACP transacylase (MAT) domain region. Ser-1001 functions as the For acyl/malonyl transferase activity in the catalytic mechanism. An N-terminal hotdog fold region spans residues 1293–1423 (LPAVLIRLKS…GTVNLKVADD (131 aa)). One can recognise a PKS/mFAS DH domain in the interval 1293-1605 (LPAVLIRLKS…FTDIRRPVPI (313 aa)). The product template (PT) domain stretch occupies residues 1296-1604 (VLIRLKSFDS…NFTDIRRPVP (309 aa)). The interval 1449–1605 (RSESLRGNVL…FTDIRRPVPI (157 aa)) is C-terminal hotdog fold. The region spanning 1657 to 1731 (TSIYEDICGL…SLVDYLHGKG (75 aa)) is the Carrier domain. Ser-1691 is modified (O-(pantetheine 4'-phosphoryl)serine). Residues 1748-1768 (SSSHAISTGASSPPDSSGASA) show a composition bias toward low complexity. Residues 1748-1773 (SSSHAISTGASSPPDSSGASAMTTPP) form a disordered region. Positions 1931-2163 (FGASETKLLN…GFKHVSWTDG (233 aa)) are methyltransferase (CMeT) domain. Positions 2198-2544 (AGVPMEEVVW…YDFICRQLGM (347 aa)) are claisen cyclase (CLC) domain. Catalysis depends on for thioesterase activity residues Ser-2321, Asp-2481, and His-2513.

Its function is as follows. Methylphloroacetophenone synthase; part of the gene cluster that mediates the biosynthesis of usnic acid, a dibenzofuran lichen product possessing a broad spectrum of biological activities. Two genes, mpas and mpao, comprise the usnic acid biosynthetic gene cluster with a single post-PKS enzyme, the methylphloracetophenone oxidase (mpao). The methylphloroacetophenone synthase (mpas) is a non-reducing polyketide synthase that produces methylphloracetophenone from acetate via a methylated tetraketide intermediate. The methylphloroacetophenone oxidase then carries out the oxidative dimerization of methylphloracetophenone to usnic acid. The polypeptide is Methylphloroacetophenone synthase (Cladonia uncialis (Cup lichen)).